The chain runs to 624 residues: Steryl-sulfatase (624 aa).

The N-terminal stretch at 1-22 (MPRPRPLLLAVMAATLADIILA) is a signal peptide. At 24–192 (DPAPAGPAPR…GTVFGPALRV (169 aa)) the chain is on the lumenal side. Ca(2+) is bound by residues aspartate 43 and aspartate 44. N-linked (GlcNAc...) asparagine glycosylation occurs at asparagine 55. Cysteine 83 provides a ligand contact to Ca(2+). Cysteine 83 functions as the Nucleophile in the catalytic mechanism. Position 83 is a 3-oxoalanine (Cys) (cysteine 83). Histidine 144 is a catalytic residue. 2 disulfides stabilise this stretch: cysteine 149-cysteine 156 and cysteine 178-cysteine 250. The helical transmembrane segment at 193–216 (FAAGPLAALGASLAAMAAARWAGL) threads the bilayer. At 217–220 (ARVP) the chain is on the cytoplasmic side. The chain crosses the membrane as a helical span at residues 221-242 (GWALAGTAAAMLAVGGPRSASC). Residues 243–624 (LGFRPANCFL…ATTRTQATPR (382 aa)) lie on the Lumenal side of the membrane. The Ca(2+) site is built by aspartate 350 and histidine 351. 2 cysteine pairs are disulfide-bonded: cysteine 454-cysteine 495 and cysteine 487-cysteine 493. A glycan (N-linked (GlcNAc...) asparagine) is linked at asparagine 465. Residues 572 to 624 (GGAGGGAGAQDDSGHAHGDGSHAHDDPGHAQDRGDDDAHYGGHATTRTQATPR) are disordered. The span at 583-611 (DSGHAHGDGSHAHDDPGHAQDRGDDDAHY) shows a compositional bias: basic and acidic residues.

The protein belongs to the sulfatase family. In terms of assembly, homodimer. The cofactor is Ca(2+). The conversion to 3-oxoalanine (also known as C-formylglycine, FGly), of a serine or cysteine residue in prokaryotes and of a cysteine residue in eukaryotes, is critical for catalytic activity.

The protein localises to the microsome membrane. It is found in the endoplasmic reticulum membrane. It catalyses the reaction dehydroepiandrosterone 3-sulfate + H2O = 3beta-hydroxyandrost-5-en-17-one + sulfate + H(+). The enzyme catalyses estrone 3-sulfate + H2O = estrone + sulfate + H(+). Catalyzes the conversion of sulfated steroid precursors, such as dehydroepiandrosterone sulfate (DHEA-S) and estrone sulfate to the free steroid. The protein is Steryl-sulfatase (Sts) of Mus musculus (Mouse).